A 105-amino-acid polypeptide reads, in one-letter code: MKMIRAIIRPEKSEEVADALDDAGFPALTKIDVIGRGKQKGIRFDEIYYDEIPKTMMLIVVDDADAERVVLVISESGYTGKIGDGKIFISPVENAYTVRTREEGL.

It belongs to the P(II) protein family.

Its function is as follows. Could be involved in the regulation of nitrogen fixation. In Methanothermobacter marburgensis (strain ATCC BAA-927 / DSM 2133 / JCM 14651 / NBRC 100331 / OCM 82 / Marburg) (Methanobacterium thermoautotrophicum), this protein is Nitrogen fixation nifHD region GlnB-like protein 1 (glnBA).